Here is a 267-residue protein sequence, read N- to C-terminus: MKFISFNINGLRARPHQLEAIIEKYQPDVIGLQEIKVADEAFPYEITENLGYHVFHHGQKGHYGVALLTKQEPKVIRRGFPTDNEDAQKRIIMADLETEFGLLTVINGYFPQGESRAHETKFPAKEKFYADLQQYLEKEHDKSNPILIMGDMNISPSDLDIGIGDENRKRWLRTGKCSFLPEERAWYQRLYDYGLEDSFRKLNPTANDKFSWFDYRSKGFDDNRGLRIDHILVSQKLAERCVDVGIALDIRAMEKPSDHAPIWAEFK.

Residue glutamate 34 participates in Mg(2+) binding. The active site involves tyrosine 109. Mg(2+)-binding residues include aspartate 151, asparagine 153, and aspartate 258. The active-site Proton donor/acceptor is the aspartate 151.

This sequence belongs to the DNA repair enzymes AP/ExoA family. In terms of assembly, monomer. It depends on Mg(2+) as a cofactor. The cofactor is Mn(2+).

It catalyses the reaction Exonucleolytic cleavage in the 3'- to 5'-direction to yield nucleoside 5'-phosphates.. In terms of biological role, major apurinic-apyrimidinic endonuclease of E.coli. It removes the damaged DNA at cytosines and guanines by cleaving on the 3'-side of the AP site by a beta-elimination reaction. The polypeptide is Exodeoxyribonuclease III (xthA) (Haemophilus influenzae (strain ATCC 51907 / DSM 11121 / KW20 / Rd)).